The chain runs to 359 residues: tRNA-specific 2-thiouridylase MnmA (359 aa).

ATP is bound by residues Gly10–Ser17 and Leu36. Catalysis depends on Cys101, which acts as the Nucleophile. Cys101 and Cys197 are disulfide-bonded. Gly125 is a binding site for ATP. Positions Lys147 to Gln149 are interaction with tRNA. Cys197 serves as the catalytic Cysteine persulfide intermediate. Positions Arg306–Tyr307 are interaction with tRNA.

It belongs to the MnmA/TRMU family.

The protein localises to the cytoplasm. It catalyses the reaction S-sulfanyl-L-cysteinyl-[protein] + uridine(34) in tRNA + AH2 + ATP = 2-thiouridine(34) in tRNA + L-cysteinyl-[protein] + A + AMP + diphosphate + H(+). In terms of biological role, catalyzes the 2-thiolation of uridine at the wobble position (U34) of tRNA, leading to the formation of s(2)U34. The sequence is that of tRNA-specific 2-thiouridylase MnmA from Chlorobium chlorochromatii (strain CaD3).